The sequence spans 512 residues: Nuclear fusion protein FUS1 (512 aa).

A helical transmembrane segment spans residues 72–96 (IGLSIGLPIGIFCFGLLILLCYFYL). The segment at 97-512 (KRNSVSISNP…VPGDCLQEYD (416 aa)) is hydrophilic. Thr178 is subject to Phosphothreonine. 2 positions are modified to phosphoserine: Ser190 and Ser256. A phosphothreonine mark is found at Thr281 and Thr424. The SH3 domain occupies 436–512 (QLGKTYTVIQ…VPGDCLQEYD (77 aa)).

O-glycosylated.

It is found in the membrane. Functionally, required for cell fusion. Negatively regulates Sho1p signaling to ensure efficient cell fusion. In terms of biological role, interacts with SHO1. The protein is Nuclear fusion protein FUS1 (FUS1) of Saccharomyces cerevisiae (strain ATCC 204508 / S288c) (Baker's yeast).